The primary structure comprises 957 residues: Glycine dehydrogenase (decarboxylating) 2 (957 aa).

K707 carries the N6-(pyridoxal phosphate)lysine modification.

This sequence belongs to the GcvP family. As to quaternary structure, the glycine cleavage system is composed of four proteins: P, T, L and H. Requires pyridoxal 5'-phosphate as cofactor.

The catalysed reaction is N(6)-[(R)-lipoyl]-L-lysyl-[glycine-cleavage complex H protein] + glycine + H(+) = N(6)-[(R)-S(8)-aminomethyldihydrolipoyl]-L-lysyl-[glycine-cleavage complex H protein] + CO2. The glycine cleavage system catalyzes the degradation of glycine. The P protein binds the alpha-amino group of glycine through its pyridoxal phosphate cofactor; CO(2) is released and the remaining methylamine moiety is then transferred to the lipoamide cofactor of the H protein. This is Glycine dehydrogenase (decarboxylating) 2 from Pseudomonas fluorescens (strain Pf0-1).